Consider the following 414-residue polypeptide: Histidine--tRNA ligase (414 aa).

It belongs to the class-II aminoacyl-tRNA synthetase family. Homodimer.

The protein resides in the cytoplasm. It carries out the reaction tRNA(His) + L-histidine + ATP = L-histidyl-tRNA(His) + AMP + diphosphate + H(+). This chain is Histidine--tRNA ligase, found in Ehrlichia ruminantium (strain Gardel).